Reading from the N-terminus, the 220-residue chain is Aspartic protease inhibitor 5 (220 aa).

An N-terminal signal peptide occupies residues methionine 1 to threonine 23. The propeptide occupies serine 24–serine 32. Positions asparagine 26–proline 31 match the Vacuolar targeting signal motif. N-linked (GlcNAc...) asparagine glycosylation occurs at asparagine 51. Cystine bridges form between cysteine 80–cysteine 125 and cysteine 174–cysteine 185.

Belongs to the protease inhibitor I3 (leguminous Kunitz-type inhibitor) family.

The protein resides in the vacuole. Inhibitor of cathepsin D (aspartic protease). May also inhibit trypsin and chymotrypsin (serine proteases). Protects the plant by inhibiting proteases of invading organisms. The chain is Aspartic protease inhibitor 5 from Solanum tuberosum (Potato).